Here is a 642-residue protein sequence, read N- to C-terminus: Threonine--tRNA ligase (642 aa).

Residues 1-61 (MPVITLPDGS…ENDATLAIIT (61 aa)) enclose the TGS domain. The catalytic stretch occupies residues 243 to 534 (DHRKIGKQLD…LTEEFAGFFP (292 aa)). 3 residues coordinate Zn(2+): cysteine 334, histidine 385, and histidine 511.

The protein belongs to the class-II aminoacyl-tRNA synthetase family. Homodimer. Zn(2+) is required as a cofactor.

The protein localises to the cytoplasm. The catalysed reaction is tRNA(Thr) + L-threonine + ATP = L-threonyl-tRNA(Thr) + AMP + diphosphate + H(+). Catalyzes the attachment of threonine to tRNA(Thr) in a two-step reaction: L-threonine is first activated by ATP to form Thr-AMP and then transferred to the acceptor end of tRNA(Thr). Also edits incorrectly charged L-seryl-tRNA(Thr). This chain is Threonine--tRNA ligase, found in Salmonella choleraesuis (strain SC-B67).